The chain runs to 207 residues: Outer-membrane lipoprotein LolB (207 aa).

A signal peptide spans 1–21; the sequence is MPQRKISFYRLLPLATLLLAA. Cys22 is lipidated: N-palmitoyl cysteine. Cys22 carries S-diacylglycerol cysteine lipidation.

The protein belongs to the LolB family. In terms of assembly, monomer.

It localises to the cell outer membrane. In terms of biological role, plays a critical role in the incorporation of lipoproteins in the outer membrane after they are released by the LolA protein. The protein is Outer-membrane lipoprotein LolB of Yersinia enterocolitica serotype O:8 / biotype 1B (strain NCTC 13174 / 8081).